A 66-amino-acid polypeptide reads, in one-letter code: Large ribosomal subunit protein uL29 (66 aa).

It belongs to the universal ribosomal protein uL29 family.

In Helicobacter pylori (strain Shi470), this protein is Large ribosomal subunit protein uL29.